A 424-amino-acid chain; its full sequence is Glutamyl-tRNA reductase (424 aa).

Substrate contacts are provided by residues 49–52 (TCNR), serine 107, 112–114 (EPQ), and glutamine 118. Cysteine 50 serves as the catalytic Nucleophile. 187–192 (GAGETI) lines the NADP(+) pocket.

Belongs to the glutamyl-tRNA reductase family. In terms of assembly, homodimer.

It carries out the reaction (S)-4-amino-5-oxopentanoate + tRNA(Glu) + NADP(+) = L-glutamyl-tRNA(Glu) + NADPH + H(+). The protein operates within porphyrin-containing compound metabolism; protoporphyrin-IX biosynthesis; 5-aminolevulinate from L-glutamyl-tRNA(Glu): step 1/2. Catalyzes the NADPH-dependent reduction of glutamyl-tRNA(Glu) to glutamate 1-semialdehyde (GSA). This Chromohalobacter salexigens (strain ATCC BAA-138 / DSM 3043 / CIP 106854 / NCIMB 13768 / 1H11) protein is Glutamyl-tRNA reductase.